The chain runs to 211 residues: Probable endo-1,4-beta-xylanase 5 (211 aa).

Positions 1–16 (MKVTAAFASLLLTAFA) are cleaved as a signal peptide. In terms of domain architecture, GH11 spans 19-210 (APEPVLVSRS…GAGSASVTIS (192 aa)). The Nucleophile role is filled by Glu106. Glu197 serves as the catalytic Proton donor.

Belongs to the glycosyl hydrolase 11 (cellulase G) family.

Its subcellular location is the secreted. It catalyses the reaction Endohydrolysis of (1-&gt;4)-beta-D-xylosidic linkages in xylans.. It participates in glycan degradation; xylan degradation. Functionally, endo-1,4-beta-xylanase involved in the hydrolysis of xylan, a major structural heterogeneous polysaccharide found in plant biomass representing the second most abundant polysaccharide in the biosphere, after cellulose. In Aspergillus niger (strain ATCC MYA-4892 / CBS 513.88 / FGSC A1513), this protein is Probable endo-1,4-beta-xylanase 5 (XYN5).